A 743-amino-acid chain; its full sequence is Keratin, type I cytoskeletal 9 (743 aa).

Over residues 1–16 (MSCRQSSSSFWSSSSS) the composition is skewed to low complexity. Residues 1 to 46 (MSCRQSSSSFWSSSSSCGGGGGRGGSGGSMRSSFSRSSRAGGGGGG) are disordered. Positions 1-130 (MSCRQSSSSF…GGEGGILNTN (130 aa)) are head. A phosphoserine mark is found at Ser-14 and Ser-16. Over residues 17 to 28 (CGGGGGRGGSGG) the composition is skewed to gly residues. Residues 29–39 (SMRSSFSRSSR) are compositionally biased toward low complexity. Phosphoserine occurs at positions 55 and 155. The tract at residues 131–166 (EKIVMQNLNSRLASYMEKVLELEESNTAMEKQIQDW) is coil 1A. An IF rod domain is found at 131–443 (EKIVMQNLNS…ELLEGGQQDF (313 aa)). A linker 1 region spans residues 167–185 (YSKRGPKVFQKDNTHYYDT). The interval 186–277 (IEDLKDRIVD…KNHKEEMSQL (92 aa)) is coil 1B. Residues 278-300 (TGQNDGDVNVEINVAPSTDLTRV) form a linker 12 region. Residues 301–439 (LNDMREEYEQ…ETYRELLEGG (139 aa)) are coil 2. Disordered regions lie at residues 440-468 (QQDF…GSYG) and 501-743 (GGSG…KMRY). The interval 440 to 709 (QQDFESSGAG…GGGSGSGGGS (270 aa)) is tail. Gly residues-rich tracts occupy residues 449–468 (GQIG…GSYG) and 501–717 (GGSG…GGGN).

The protein belongs to the intermediate filament family. Heterotetramer of two type I and two type II keratins. In terms of tissue distribution, expressed in footpad epidermis and testis (at protein level).

In terms of biological role, may serve an important special function either in the mature palmar and plantar skin tissue or in the morphogenetic program of the formation of these tissues. Plays a role in keratin filament assembly. Plays an essential role in the correct development of sperm. This Mus musculus (Mouse) protein is Keratin, type I cytoskeletal 9.